Reading from the N-terminus, the 157-residue chain is Protein-export protein SecB (157 aa).

This sequence belongs to the SecB family. As to quaternary structure, homotetramer, a dimer of dimers. One homotetramer interacts with 1 SecA dimer.

It is found in the cytoplasm. Functionally, one of the proteins required for the normal export of preproteins out of the cell cytoplasm. It is a molecular chaperone that binds to a subset of precursor proteins, maintaining them in a translocation-competent state. It also specifically binds to its receptor SecA. The chain is Protein-export protein SecB from Shewanella oneidensis (strain ATCC 700550 / JCM 31522 / CIP 106686 / LMG 19005 / NCIMB 14063 / MR-1).